A 168-amino-acid polypeptide reads, in one-letter code: Ribosome maturation factor RimP (168 aa).

This sequence belongs to the RimP family.

The protein localises to the cytoplasm. Its function is as follows. Required for maturation of 30S ribosomal subunits. The sequence is that of Ribosome maturation factor RimP from Bordetella bronchiseptica (strain ATCC BAA-588 / NCTC 13252 / RB50) (Alcaligenes bronchisepticus).